The primary structure comprises 172 residues: Stellate protein CG33238 (172 aa).

Belongs to the casein kinase 2 subunit beta family. Interacts in vitro with the casein kinase 2 alpha subunit (CkII-alpha). The relevance of such interaction is however unclear in vivo. In terms of tissue distribution, probably not expressed in wild-type flies. In males lacking the Y chromosome, it is testis-specific and constitutes the main component of star-shaped crystals.

Its function is as follows. Unknown. In males lacking the Y chromosome, its strong overexpression leads to the appearance of proteinaceous star-shaped crystals in the primary spermatocytes causing meiotic drive, possibly by interfering with normal casein kinase 2 activity. The protein is Stellate protein CG33238 (Ste:CG33238) of Drosophila melanogaster (Fruit fly).